We begin with the raw amino-acid sequence, 107 residues long: Phosphoribosyl-ATP pyrophosphatase (107 aa).

Belongs to the PRA-PH family.

Its subcellular location is the cytoplasm. The catalysed reaction is 1-(5-phospho-beta-D-ribosyl)-ATP + H2O = 1-(5-phospho-beta-D-ribosyl)-5'-AMP + diphosphate + H(+). Its pathway is amino-acid biosynthesis; L-histidine biosynthesis; L-histidine from 5-phospho-alpha-D-ribose 1-diphosphate: step 2/9. This chain is Phosphoribosyl-ATP pyrophosphatase, found in Brucella abortus (strain S19).